Consider the following 227-residue polypeptide: Phosphoribosylformylglycinamidine synthase subunit PurQ (227 aa).

The Glutamine amidotransferase type-1 domain maps to 3–225 (FAVIVFPGSN…LKQWRETYVV (223 aa)). Catalysis depends on Cys86, which acts as the Nucleophile. Residues His194 and Glu196 contribute to the active site.

In terms of assembly, part of the FGAM synthase complex composed of 1 PurL, 1 PurQ and 2 PurS subunits.

It is found in the cytoplasm. It catalyses the reaction N(2)-formyl-N(1)-(5-phospho-beta-D-ribosyl)glycinamide + L-glutamine + ATP + H2O = 2-formamido-N(1)-(5-O-phospho-beta-D-ribosyl)acetamidine + L-glutamate + ADP + phosphate + H(+). The enzyme catalyses L-glutamine + H2O = L-glutamate + NH4(+). Its pathway is purine metabolism; IMP biosynthesis via de novo pathway; 5-amino-1-(5-phospho-D-ribosyl)imidazole from N(2)-formyl-N(1)-(5-phospho-D-ribosyl)glycinamide: step 1/2. Its function is as follows. Part of the phosphoribosylformylglycinamidine synthase complex involved in the purines biosynthetic pathway. Catalyzes the ATP-dependent conversion of formylglycinamide ribonucleotide (FGAR) and glutamine to yield formylglycinamidine ribonucleotide (FGAM) and glutamate. The FGAM synthase complex is composed of three subunits. PurQ produces an ammonia molecule by converting glutamine to glutamate. PurL transfers the ammonia molecule to FGAR to form FGAM in an ATP-dependent manner. PurS interacts with PurQ and PurL and is thought to assist in the transfer of the ammonia molecule from PurQ to PurL. The sequence is that of Phosphoribosylformylglycinamidine synthase subunit PurQ from Bacillus cereus (strain B4264).